The sequence spans 235 residues: Putative N-acetylmannosamine-6-phosphate 2-epimerase (235 aa).

Belongs to the NanE family.

The enzyme catalyses an N-acyl-D-glucosamine 6-phosphate = an N-acyl-D-mannosamine 6-phosphate. The protein operates within amino-sugar metabolism; N-acetylneuraminate degradation; D-fructose 6-phosphate from N-acetylneuraminate: step 3/5. Converts N-acetylmannosamine-6-phosphate (ManNAc-6-P) to N-acetylglucosamine-6-phosphate (GlcNAc-6-P). In Edwardsiella ictaluri (strain 93-146), this protein is Putative N-acetylmannosamine-6-phosphate 2-epimerase.